We begin with the raw amino-acid sequence, 480 residues long: Gamma-aminobutyric acid receptor subunit rho-1 (480 aa).

A signal peptide spans 1-21; it reads MLAVRNMKFGIFLLWWGWVLA. Residues 22 to 281 lie on the Extracellular side of the membrane; it reads AESTVHWPGR…LYINFTLRRH (260 aa). The disordered stretch occupies residues 31 to 67; that stretch reads REVHEPSKKGSRPQRQRRGAHDDAHKQGSPILKRSSD. The span at 39-48 shows a compositional bias: basic residues; sequence KGSRPQRQRR. Residue Arg-126 participates in 4-aminobutanoate binding. The N-linked (GlcNAc...) asparagine glycan is linked to Asn-141. 4-aminobutanoate is bound at residue Ser-190. A disulfide bridge connects residues Cys-199 and Cys-213. Residue Glu-218 coordinates 4-aminobutanoate. 2 N-linked (GlcNAc...) asparagine glycosylation sites follow: Asn-235 and Asn-275. Residues 282–302 traverse the membrane as a helical segment; that stretch reads IFFFLLQTYFPATLMVMLSWV. Topologically, residues 303 to 314 are cytoplasmic; sequence SFWIDRRAVPAR. A helical membrane pass occupies residues 315–335; the sequence is VPLGITTVLTMSTIITGVNAS. The Extracellular segment spans residues 336-346; sequence MPRVSYIKAVD. Residues 347–367 form a helical membrane-spanning segment; that stretch reads IYLWVSFVFVFLSVLEYAAVN. Residues 368–458 are Cytoplasmic-facing; sequence YLTTVQERKE…MRINTHAIDK (91 aa). A helical membrane pass occupies residues 459 to 479; the sequence is YSRIIFPAAYILFNLIYWSIF. Position 480 (Ser-480) is a topological domain, extracellular.

This sequence belongs to the ligand-gated ion channel (TC 1.A.9) family. Gamma-aminobutyric acid receptor (TC 1.A.9.5) subfamily. GABRR1 sub-subfamily. As to quaternary structure, three rho subunits (rho-1/GBRR1, rho-2/GBRR2 and rho-3/GBRR3) coassemble either to form functional homopentamers or heteropentamers. Rho-1/GBRR1 subunits can also associate with alpha-1/GBRA1 subunits to form a functional GABAAR. Interacts with SQSTM1.

It is found in the postsynaptic cell membrane. The protein localises to the cell membrane. The enzyme catalyses chloride(in) = chloride(out). Inhibited by TPMPA, a rho-specific antagonist. Inhibited by picrotoxin, when forming a homopentamer. In contrast with other GABAARs, rho-1 GABAAR is not inhibited by bicuculline, when forming a homopentamer. Down-regulated by external protons when forming a homopentamer. Its function is as follows. Rho subunit of the pentameric ligand-gated chloride channels responsible for mediating the effects of gamma-aminobutyric acid (GABA), the major inhibitory neurotransmitter in the brain. Rho-containing GABA-gated chloride channels are a subclass of GABA(A) receptors (GABAARs) entirely composed of rho subunits, where GABA molecules bind at the rho intersubunit interfaces. When activated by GABA, rho-GABAARs selectively allow the flow of chloride anions across the cell membrane down their electrochemical gradient. Rho-1 subunits are primarily expressed in retina where rho-1-containing GABAARs may play a role in retinal neurotransmission. Rho-1 GABAARs are also involved in neuronal tonic (extrasynaptic) and phasic (synaptic) transmission in the Purkinje neurons of the cerebellum. Rho-1 GABAARs may also contribute to the regulation of glial development in the cerebellum by controlling extrasynaptic transmission. This chain is Gamma-aminobutyric acid receptor subunit rho-1, found in Rattus norvegicus (Rat).